A 61-amino-acid chain; its full sequence is Small ribosomal subunit protein uS14 (61 aa).

Zn(2+) is bound by residues Cys-24, Cys-27, Cys-40, and Cys-43.

It belongs to the universal ribosomal protein uS14 family. Zinc-binding uS14 subfamily. Part of the 30S ribosomal subunit. Contacts proteins S3 and S10. Zn(2+) is required as a cofactor.

In terms of biological role, binds 16S rRNA, required for the assembly of 30S particles and may also be responsible for determining the conformation of the 16S rRNA at the A site. In Deinococcus deserti (strain DSM 17065 / CIP 109153 / LMG 22923 / VCD115), this protein is Small ribosomal subunit protein uS14.